Consider the following 166-residue polypeptide: Phosphopantetheine adenylyltransferase (166 aa).

Thr11 provides a ligand contact to substrate. Residues Thr11 to Phe12 and His19 each bind ATP. Substrate contacts are provided by Lys43, Thr79, and Arg93. ATP is bound by residues Glu104 and Leu128–Thr134.

Belongs to the bacterial CoaD family. In terms of assembly, homohexamer. Mg(2+) is required as a cofactor.

The protein localises to the cytoplasm. The catalysed reaction is (R)-4'-phosphopantetheine + ATP + H(+) = 3'-dephospho-CoA + diphosphate. Its pathway is cofactor biosynthesis; coenzyme A biosynthesis; CoA from (R)-pantothenate: step 4/5. Functionally, reversibly transfers an adenylyl group from ATP to 4'-phosphopantetheine, yielding dephospho-CoA (dPCoA) and pyrophosphate. The polypeptide is Phosphopantetheine adenylyltransferase (Lactococcus lactis subsp. cremoris (strain MG1363)).